The primary structure comprises 238 residues: Riboflavin synthase (238 aa).

2 Lumazine-binding repeats span residues 1–103 (MFTG…FGGH) and 104–205 (YVQG…EKQI). 2,4-dihydroxypteridine-binding positions include 4–6 (GIV), 54–56 (CLT), and 68–73 (GISPET). Serine 95 carries the phosphoserine modification. 2,4-dihydroxypteridine contacts are provided by residues 107 to 109 (GHV), lysine 143, 152 to 154 (SLT), and 170 to 175 (SMIKHT).

As to quaternary structure, homotrimer.

It catalyses the reaction 2 6,7-dimethyl-8-(1-D-ribityl)lumazine + H(+) = 5-amino-6-(D-ribitylamino)uracil + riboflavin. It participates in cofactor biosynthesis; riboflavin biosynthesis; riboflavin from 2-hydroxy-3-oxobutyl phosphate and 5-amino-6-(D-ribitylamino)uracil: step 2/2. Catalyzes the dismutation of two molecules of 6,7-dimethyl-8-ribityllumazine, resulting in the formation of riboflavin and 5-amino-6-(D-ribitylamino)uracil. The polypeptide is Riboflavin synthase (Saccharomyces cerevisiae (strain ATCC 204508 / S288c) (Baker's yeast)).